We begin with the raw amino-acid sequence, 651 residues long: Probable endo-1,3(4)-beta-glucanase NFIA_089530 (651 aa).

The N-terminal stretch at 1–21 is a signal peptide; it reads MAPSSLFLSVGSLIASSLVSA. Positions 36 to 289 constitute a GH16 domain; the sequence is ESWQGESFIN…WAGNVFAEST (254 aa). Asn-64 is a glycosylation site (N-linked (GlcNAc...) asparagine). The active-site Nucleophile is Glu-145. Residue Glu-150 is the Proton donor of the active site. The N-linked (GlcNAc...) asparagine glycan is linked to Asn-200. Residues 364 to 378 show a composition bias toward low complexity; that stretch reads PVPAETTAVPQPAQT. Disordered regions lie at residues 364–422 and 508–557; these read PVPA…ESTS and SEIP…PVPA. Composition is skewed to polar residues over residues 379 to 400 and 520 to 535; these read NTVATSAADYATQSSAETTTVP and QAVSTGSFDDSDTAQG. The span at 542–557 shows a compositional bias: low complexity; it reads SIASASAAPSTIPVPA. The GPI-anchor amidated asparagine moiety is linked to residue Asn-629. Residues 630-651 constitute a propeptide, removed in mature form; it reads GANRMSVGLSGLIGVMFIAALA.

This sequence belongs to the glycosyl hydrolase 16 family.

The protein localises to the cell membrane. The catalysed reaction is Endohydrolysis of (1-&gt;3)- or (1-&gt;4)-linkages in beta-D-glucans when the glucose residue whose reducing group is involved in the linkage to be hydrolyzed is itself substituted at C-3.. Mixed-linked glucanase involved in the degradation of complex natural cellulosic substrates. The sequence is that of Probable endo-1,3(4)-beta-glucanase NFIA_089530 from Neosartorya fischeri (strain ATCC 1020 / DSM 3700 / CBS 544.65 / FGSC A1164 / JCM 1740 / NRRL 181 / WB 181) (Aspergillus fischerianus).